The sequence spans 747 residues: Polyribonucleotide nucleotidyltransferase (747 aa).

Residues Asp487 and Asp493 each coordinate Mg(2+). The KH domain maps to 554 to 613 (PSTTTIKIDKDKIRDIIGPGGKIIKEICETSGAKIDISDDGTVSVYAADRDKLKIASDKI). Positions 623-691 (GEIFNGTVTK…NKGKAKLTIK (69 aa)) constitute an S1 motif domain. The segment at 694–716 (DKDKSLNNPKPQNSINNAKENSE) is disordered. Positions 699-712 (LNNPKPQNSINNAK) are enriched in polar residues.

This sequence belongs to the polyribonucleotide nucleotidyltransferase family. The cofactor is Mg(2+).

The protein localises to the cytoplasm. It catalyses the reaction RNA(n+1) + phosphate = RNA(n) + a ribonucleoside 5'-diphosphate. Functionally, involved in mRNA degradation. Catalyzes the phosphorolysis of single-stranded polyribonucleotides processively in the 3'- to 5'-direction. The protein is Polyribonucleotide nucleotidyltransferase of Rickettsia canadensis (strain McKiel).